A 3658-amino-acid polypeptide reads, in one-letter code: Serine/threonine-protein kinase SMG1 (3658 aa).

2 disordered regions span residues 1 to 99 (MSRR…TYGR) and 116 to 142 (FTSVQHGSRALATKDMRKSQERSMSYS). Over residues 24–33 (NDWQPRTDSA) the composition is skewed to polar residues. 2 stretches are compositionally biased toward basic and acidic residues: residues 67-84 (QRHDDTRGHADIQNDEKG) and 127-136 (ATKDMRKSQE). The residue at position 171 (K171) is an N6-acetyllysine. The FAT domain occupies 1281 to 1864 (RELQKSIEVQ…LYPAIVGTIS (584 aa)). Residues 1815-1850 (APWRGIIPQLFSRLNHPEVYVRQSICNLLCRVAQDS) form an HEAT repeat. The interval 1896–1917 (ECEGGSPPASQDSNKDEPKSGL) is disordered. The 340-residue stretch at 2122–2461 (VGGTITILPT…MEREITRSLF (340 aa)) folds into the PI3K/PI4K catalytic domain. The tract at residues 2128-2134 (ILPTKTK) is G-loop. The segment at 2330 to 2338 (GLGDRHLDN) is catalytic loop. Residues 2350-2374 (HIDYNVCFEKGKSLRVPEKVPFRMT) form an activation loop region. A Phosphothreonine modification is found at T3547. S3553 and S3567 each carry phosphoserine. The segment covering 3565–3576 (ATSADTPPSTIP) has biased composition (polar residues). The tract at residues 3565–3588 (ATSADTPPSTIPGTGKSIACSPKK) is disordered. Phosphothreonine occurs at positions 3570 and 3574. An FATC domain is found at 3626–3658 (RRMSVAEQVDYVIKEATNLDNLAQLYEGWTAWV).

It belongs to the PI3/PI4-kinase family. As to quaternary structure, component of the SMG1C complex composed of SMG1, SMG8 and SMG9; the recruitment of SMG8 to SMG1 N-terminus induces a large conformational change in the SMG1 C-terminal head domain containing the catalytic domain. Component of the transient SURF (SMG1-UPF1-eRF1-eRF3) complex. Part of a complex composed of SMG1, DHX34 and UPF1; within the complex DHX34 acts as a scaffolding protein to facilitate SMG1 phosphorylation of UPF1. Interacts with PRKCI. Interacts with TELO2 and TTI1. Interacts with RUVBL1 and RUVBL2. Interacts with DHX34 (via C-terminus); the interaction is RNA-independent. Requires Mn(2+) as cofactor. Autophosphorylated.

Its subcellular location is the nucleus. It is found in the cytoplasm. The catalysed reaction is L-seryl-[protein] + ATP = O-phospho-L-seryl-[protein] + ADP + H(+). It catalyses the reaction L-threonyl-[protein] + ATP = O-phospho-L-threonyl-[protein] + ADP + H(+). Its activity is regulated as follows. Inhibited by caffeine, LY294002 and wortmannin. Serine/threonine protein kinase involved in both mRNA surveillance and genotoxic stress response pathways. Recognizes the substrate consensus sequence [ST]-Q. Plays a central role in nonsense-mediated decay (NMD) of mRNAs containing premature stop codons by phosphorylating UPF1/RENT1. Recruited by release factors to stalled ribosomes together with SMG8 and SMG9 (forming the SMG1C protein kinase complex), and UPF1 to form the transient SURF (SMG1-UPF1-eRF1-eRF3) complex. In EJC-dependent NMD, the SURF complex associates with the exon junction complex (EJC) through UPF2 and allows the formation of an UPF1-UPF2-UPF3 surveillance complex which is believed to activate NMD. Also acts as a genotoxic stress-activated protein kinase that displays some functional overlap with ATM. Can phosphorylate p53/TP53 and is required for optimal p53/TP53 activation after cellular exposure to genotoxic stress. Its depletion leads to spontaneous DNA damage and increased sensitivity to ionizing radiation (IR). May activate PRKCI but not PRKCZ. This chain is Serine/threonine-protein kinase SMG1, found in Mus musculus (Mouse).